We begin with the raw amino-acid sequence, 122 residues long: UPF0145 protein TV0671 (122 aa).

It belongs to the UPF0145 family.

The polypeptide is UPF0145 protein TV0671 (Thermoplasma volcanium (strain ATCC 51530 / DSM 4299 / JCM 9571 / NBRC 15438 / GSS1)).